A 478-amino-acid polypeptide reads, in one-letter code: tRNA modification GTPase MnmE (478 aa).

(6S)-5-formyl-5,6,7,8-tetrahydrofolate is bound by residues R36, E94, and K133. A TrmE-type G domain is found at 230–402 (GIHVVLAGRP…LVETLCAKVG (173 aa)). N240 provides a ligand contact to K(+). GTP contacts are provided by residues 240 to 245 (NAGKSS), 259 to 265 (TDVAGTT), and 284 to 287 (DTAG). Mg(2+) is bound at residue S244. K(+) contacts are provided by T259, V261, and T264. T265 contributes to the Mg(2+) binding site. K478 lines the (6S)-5-formyl-5,6,7,8-tetrahydrofolate pocket.

The protein belongs to the TRAFAC class TrmE-Era-EngA-EngB-Septin-like GTPase superfamily. TrmE GTPase family. Homodimer. Heterotetramer of two MnmE and two MnmG subunits. Requires K(+) as cofactor.

It localises to the cytoplasm. Exhibits a very high intrinsic GTPase hydrolysis rate. Involved in the addition of a carboxymethylaminomethyl (cmnm) group at the wobble position (U34) of certain tRNAs, forming tRNA-cmnm(5)s(2)U34. This chain is tRNA modification GTPase MnmE, found in Psychrobacter arcticus (strain DSM 17307 / VKM B-2377 / 273-4).